We begin with the raw amino-acid sequence, 347 residues long: Dihydroorotase (347 aa).

H13 and H15 together coordinate Zn(2+). Substrate contacts are provided by residues 15–17 (HLR) and N41. Zn(2+)-binding residues include K99, H136, and H174. At K99 the chain carries N6-carboxylysine. H136 provides a ligand contact to substrate. L219 contacts substrate. Position 247 (D247) interacts with Zn(2+). Residue D247 is part of the active site. H251 and A263 together coordinate substrate.

This sequence belongs to the metallo-dependent hydrolases superfamily. DHOase family. Class II DHOase subfamily. Homodimer. Zn(2+) is required as a cofactor.

It carries out the reaction (S)-dihydroorotate + H2O = N-carbamoyl-L-aspartate + H(+). It participates in pyrimidine metabolism; UMP biosynthesis via de novo pathway; (S)-dihydroorotate from bicarbonate: step 3/3. Its function is as follows. Catalyzes the reversible cyclization of carbamoyl aspartate to dihydroorotate. This Rhizobium meliloti (strain 1021) (Ensifer meliloti) protein is Dihydroorotase.